The primary structure comprises 206 residues: Thymidylate kinase (206 aa).

Gly11 to Thr18 serves as a coordination point for ATP.

It belongs to the thymidylate kinase family.

The catalysed reaction is dTMP + ATP = dTDP + ADP. Its function is as follows. Phosphorylation of dTMP to form dTDP in both de novo and salvage pathways of dTTP synthesis. This chain is Thymidylate kinase (tmk), found in Deinococcus radiodurans (strain ATCC 13939 / DSM 20539 / JCM 16871 / CCUG 27074 / LMG 4051 / NBRC 15346 / NCIMB 9279 / VKM B-1422 / R1).